A 757-amino-acid chain; its full sequence is 5-methyltetrahydropteroyltriglutamate--homocysteine methyltransferase (757 aa).

Residues 16–19 (RELK) and K112 contribute to the 5-methyltetrahydropteroyltri-L-glutamate site. Residues 433–435 (IGS) and E486 each bind L-homocysteine. Residues 433–435 (IGS) and E486 contribute to the L-methionine site. 5-methyltetrahydropteroyltri-L-glutamate-binding positions include 517–518 (RC) and W563. An L-homocysteine-binding site is contributed by D601. D601 contributes to the L-methionine binding site. Position 607 (E607) interacts with 5-methyltetrahydropteroyltri-L-glutamate. Positions 643, 645, and 667 each coordinate Zn(2+). H696 serves as the catalytic Proton donor. Position 728 (C728) interacts with Zn(2+).

It belongs to the vitamin-B12 independent methionine synthase family. Zn(2+) is required as a cofactor.

The enzyme catalyses 5-methyltetrahydropteroyltri-L-glutamate + L-homocysteine = tetrahydropteroyltri-L-glutamate + L-methionine. It participates in amino-acid biosynthesis; L-methionine biosynthesis via de novo pathway; L-methionine from L-homocysteine (MetE route): step 1/1. Catalyzes the transfer of a methyl group from 5-methyltetrahydrofolate to homocysteine resulting in methionine formation. The chain is 5-methyltetrahydropteroyltriglutamate--homocysteine methyltransferase from Histophilus somni (strain 2336) (Haemophilus somnus).